The sequence spans 198 residues: Recombination protein RecR (198 aa).

The C4-type zinc finger occupies 57–72 (CSSCGHITDKDPCYIC). Residues 80–175 (SIICVVQDPK…KITRIAHGLP (96 aa)) enclose the Toprim domain.

The protein belongs to the RecR family.

In terms of biological role, may play a role in DNA repair. It seems to be involved in an RecBC-independent recombinational process of DNA repair. It may act with RecF and RecO. In Anoxybacillus flavithermus (strain DSM 21510 / WK1), this protein is Recombination protein RecR.